The following is a 276-amino-acid chain: Large ribosomal subunit protein uL2 (276 aa).

Residues V224–K254 form a disordered region.

This sequence belongs to the universal ribosomal protein uL2 family. In terms of assembly, part of the 50S ribosomal subunit. Forms a bridge to the 30S subunit in the 70S ribosome.

In terms of biological role, one of the primary rRNA binding proteins. Required for association of the 30S and 50S subunits to form the 70S ribosome, for tRNA binding and peptide bond formation. It has been suggested to have peptidyltransferase activity; this is somewhat controversial. Makes several contacts with the 16S rRNA in the 70S ribosome. This is Large ribosomal subunit protein uL2 from Gluconobacter oxydans (strain 621H) (Gluconobacter suboxydans).